We begin with the raw amino-acid sequence, 215 residues long: A-type ATP synthase subunit E (215 aa).

Belongs to the V-ATPase E subunit family. In terms of assembly, has multiple subunits with at least A(3), B(3), C, D, E, F, H, I and proteolipid K(x).

Its subcellular location is the cell membrane. In terms of biological role, component of the A-type ATP synthase that produces ATP from ADP in the presence of a proton gradient across the membrane. The polypeptide is A-type ATP synthase subunit E (Thermofilum pendens (strain DSM 2475 / Hrk 5)).